The following is a 46-amino-acid chain: Diuretic hormone (46 aa).

Isoleucine amide is present on isoleucine 46.

This sequence belongs to the sauvagine/corticotropin-releasing factor/urotensin I family.

Its subcellular location is the secreted. Regulation of fluid secretion. Stimulates primary urine secretion by Malpighian tubules and causes a dose-dependent stimulation of cAMP levels in the tubules. The polypeptide is Diuretic hormone (Periplaneta americana (American cockroach)).